The sequence spans 245 residues: tRNA (guanine-N(1)-)-methyltransferase (245 aa).

S-adenosyl-L-methionine contacts are provided by residues glycine 111 and methionine 131–leucine 136.

The protein belongs to the RNA methyltransferase TrmD family. As to quaternary structure, homodimer.

It is found in the cytoplasm. The catalysed reaction is guanosine(37) in tRNA + S-adenosyl-L-methionine = N(1)-methylguanosine(37) in tRNA + S-adenosyl-L-homocysteine + H(+). Its function is as follows. Specifically methylates guanosine-37 in various tRNAs. This chain is tRNA (guanine-N(1)-)-methyltransferase, found in Staphylococcus epidermidis (strain ATCC 35984 / DSM 28319 / BCRC 17069 / CCUG 31568 / BM 3577 / RP62A).